Reading from the N-terminus, the 358-residue chain is Protein IncC (358 aa).

Residues 1-101 (MGAIHEETAN…VGSRRQEETG (101 aa)) form a disordered region. Residues 88 to 99 (HRQEVGSRRQEE) show a composition bias toward basic and acidic residues.

The protein belongs to the ParA family.

Its function is as follows. This is one of the proteins encoded by the trfB operon; it is involved in plasmid maintenance and replication. This is Protein IncC (incC) from Escherichia coli.